A 622-amino-acid chain; its full sequence is uncharacterized protein (622 aa).

A signal peptide spans 1–20 (MKIKAVAIFLSLLMIISLFS).

This is an uncharacterized protein from Methanocaldococcus jannaschii (strain ATCC 43067 / DSM 2661 / JAL-1 / JCM 10045 / NBRC 100440) (Methanococcus jannaschii).